The sequence spans 365 residues: MSWGQALRNYKPTGQQLFFSLTALLAAAVWGRDRQLDIGLFSPQSQLLALGLGFSLAAIAGYWVVPLLRRIKAGQFIREDGPQSHLQKAGTPTMGGIFAIPAGLLPALILAGRSPLVWALAFVTLAYATIGWLDDWQILRHRNNKGISPKLKLCLQFGAAFLFCLWLISQQGWQGTITTITLPFGWSLALSLLFWPLAVFTLVSESNATNLTDGLDGLAGGTGAAVLAGLGLWLAPQDPAIATFCCSLAGGFLGFLLHNRNPARVFMGDTGSLALGGAIAAIAIVANCLWVLLVMGGLFVLESISVILQVSYYKATKGPDGKGKRLLRMAPWHHHLELGGWSETQVVASFYGLTLLLIASCWLLN.

A run of 9 helical transmembrane segments spans residues Leu47 to Leu67, Pro92 to Gly112, Ser114 to Asp134, Leu153 to Trp173, Ile180 to Phe200, Leu215 to Ala235, Pro239 to Asn259, Ala281 to Leu301, and Thr344 to Leu364.

It belongs to the glycosyltransferase 4 family. MraY subfamily. Requires Mg(2+) as cofactor.

The protein localises to the cell inner membrane. It carries out the reaction UDP-N-acetyl-alpha-D-muramoyl-L-alanyl-gamma-D-glutamyl-meso-2,6-diaminopimeloyl-D-alanyl-D-alanine + di-trans,octa-cis-undecaprenyl phosphate = di-trans,octa-cis-undecaprenyl diphospho-N-acetyl-alpha-D-muramoyl-L-alanyl-D-glutamyl-meso-2,6-diaminopimeloyl-D-alanyl-D-alanine + UMP. It participates in cell wall biogenesis; peptidoglycan biosynthesis. In terms of biological role, catalyzes the initial step of the lipid cycle reactions in the biosynthesis of the cell wall peptidoglycan: transfers peptidoglycan precursor phospho-MurNAc-pentapeptide from UDP-MurNAc-pentapeptide onto the lipid carrier undecaprenyl phosphate, yielding undecaprenyl-pyrophosphoryl-MurNAc-pentapeptide, known as lipid I. The polypeptide is Phospho-N-acetylmuramoyl-pentapeptide-transferase (Synechococcus elongatus (strain ATCC 33912 / PCC 7942 / FACHB-805) (Anacystis nidulans R2)).